The primary structure comprises 252 residues: MQLPPALCARLAAGPGAAEPLPVERDPAAGAAPFRFVARPVRFPREHQFFEDGDVQRHLYLQDVIMQVADVPEKPRVPAFACQVAGCCQVFDALDDYEHHYHTLHGNVCSFCKRAFPSGHLLDAHILEWHDSLFQILSERQDMYQCLVEGCTEKFKTSRDRKDHMVRMHLYPADFRFDKPKKSRSPASAEAPGDSGERSEGEAMEICSEPVAASPAPAGERRIYRHRIPSTICFGQGAARGFKSNKKKTKQC.

C2H2-type zinc fingers lie at residues 80-105 (FACQVAGCCQVFDALDDYEHHYHTLH), 107-130 (NVCSFCKRAFPSGHLLDAHILEWH), and 144-169 (YQCLVEGCTEKFKTSRDRKDHMVRMH). The interval 177–221 (FDKPKKSRSPASAEAPGDSGERSEGEAMEICSEPVAASPAPAGER) is disordered. Position 240 is an omega-N-methylarginine (Arg240).

Belongs to the krueppel C2H2-type zinc-finger protein family.

It is found in the nucleus. May be involved in transcriptional regulation. This Homo sapiens (Human) protein is Zinc finger protein 511.